A 135-amino-acid chain; its full sequence is Large ribosomal subunit protein mL54 (135 aa).

A mitochondrion-targeting transit peptide spans M1 to A14.

Belongs to the mitochondrion-specific ribosomal protein mL54 family. As to quaternary structure, component of the mitochondrial ribosome large subunit (39S) which comprises a 16S rRNA and about 50 distinct proteins.

The protein localises to the mitochondrion. The polypeptide is Large ribosomal subunit protein mL54 (Mrpl54) (Mus musculus (Mouse)).